A 102-amino-acid polypeptide reads, in one-letter code: Large ribosomal subunit protein bL21 (102 aa).

It belongs to the bacterial ribosomal protein bL21 family. Part of the 50S ribosomal subunit. Contacts protein L20.

Its function is as follows. This protein binds to 23S rRNA in the presence of protein L20. The chain is Large ribosomal subunit protein bL21 from Bacillus velezensis (strain DSM 23117 / BGSC 10A6 / LMG 26770 / FZB42) (Bacillus amyloliquefaciens subsp. plantarum).